The chain runs to 177 residues: ATP synthase subunit delta (177 aa).

Belongs to the ATPase delta chain family. In terms of assembly, F-type ATPases have 2 components, F(1) - the catalytic core - and F(0) - the membrane proton channel. F(1) has five subunits: alpha(3), beta(3), gamma(1), delta(1), epsilon(1). F(0) has three main subunits: a(1), b(2) and c(10-14). The alpha and beta chains form an alternating ring which encloses part of the gamma chain. F(1) is attached to F(0) by a central stalk formed by the gamma and epsilon chains, while a peripheral stalk is formed by the delta and b chains.

It localises to the cell inner membrane. Functionally, f(1)F(0) ATP synthase produces ATP from ADP in the presence of a proton or sodium gradient. F-type ATPases consist of two structural domains, F(1) containing the extramembraneous catalytic core and F(0) containing the membrane proton channel, linked together by a central stalk and a peripheral stalk. During catalysis, ATP synthesis in the catalytic domain of F(1) is coupled via a rotary mechanism of the central stalk subunits to proton translocation. In terms of biological role, this protein is part of the stalk that links CF(0) to CF(1). It either transmits conformational changes from CF(0) to CF(1) or is implicated in proton conduction. This chain is ATP synthase subunit delta, found in Shewanella halifaxensis (strain HAW-EB4).